Reading from the N-terminus, the 225-residue chain is Transmembrane protein C16orf54 homolog (225 aa).

Residues 32–52 (PCIPIMLGLASLTAFFIITTA) traverse the membrane as a helical segment. Disordered regions lie at residues 106–163 (DRAP…ERPH) and 178–200 (EAGL…EPDW). Thr-113 and Thr-117 each carry phosphothreonine. The segment covering 122 to 140 (ATAPPATSAPYSSLSSLVP) has biased composition (low complexity). The residue at position 195 (Ser-195) is a Phosphoserine.

It is found in the membrane. This Mus musculus (Mouse) protein is Transmembrane protein C16orf54 homolog.